Consider the following 332-residue polypeptide: tRNA dimethylallyltransferase 2 (332 aa).

15 to 22 (GPTASGKT) is a binding site for ATP. Residue 17–22 (TASGKT) participates in substrate binding. Interaction with substrate tRNA stretches follow at residues 40 to 43 (DSVM) and 164 to 168 (QRIQR).

The protein belongs to the IPP transferase family. In terms of assembly, monomer. Requires Mg(2+) as cofactor.

The catalysed reaction is adenosine(37) in tRNA + dimethylallyl diphosphate = N(6)-dimethylallyladenosine(37) in tRNA + diphosphate. Functionally, catalyzes the transfer of a dimethylallyl group onto the adenine at position 37 in tRNAs that read codons beginning with uridine, leading to the formation of N6-(dimethylallyl)adenosine (i(6)A). In Hahella chejuensis (strain KCTC 2396), this protein is tRNA dimethylallyltransferase 2.